A 203-amino-acid polypeptide reads, in one-letter code: Glycerol-3-phosphate acyltransferase (203 aa).

4 helical membrane passes run 6–26 (LTLLMIVAAYLAGSVSSAVLV), 82–102 (AISLGLIAIAACLGHIYPVFF), 118–138 (APIGDDLAICLMASWVVLVLI), and 141–161 (YSSLAAIITALLAPLYTWWLD).

Belongs to the PlsY family. Probably interacts with PlsX.

Its subcellular location is the cell inner membrane. The enzyme catalyses an acyl phosphate + sn-glycerol 3-phosphate = a 1-acyl-sn-glycero-3-phosphate + phosphate. It functions in the pathway lipid metabolism; phospholipid metabolism. Its function is as follows. Catalyzes the transfer of an acyl group from acyl-phosphate (acyl-PO(4)) to glycerol-3-phosphate (G3P) to form lysophosphatidic acid (LPA). This enzyme utilizes acyl-phosphate as fatty acyl donor, but not acyl-CoA or acyl-ACP. The sequence is that of Glycerol-3-phosphate acyltransferase from Shewanella oneidensis (strain ATCC 700550 / JCM 31522 / CIP 106686 / LMG 19005 / NCIMB 14063 / MR-1).